A 150-amino-acid polypeptide reads, in one-letter code: SPbeta prophage-derived uncharacterized protein YoqH (150 aa).

Positions 1 to 23 are cleaved as a signal peptide; the sequence is MKRFILVLSFLSIIVAYPIQTNA.

This Bacillus subtilis (strain 168) protein is SPbeta prophage-derived uncharacterized protein YoqH (yoqH).